A 62-amino-acid polypeptide reads, in one-letter code: Photosystem II reaction center protein Z (62 aa).

2 helical membrane passes run 8 to 28 and 41 to 61; these read AVFA…AVFA and FSGA…NSSV.

This sequence belongs to the PsbZ family. PSII is composed of 1 copy each of membrane proteins PsbA, PsbB, PsbC, PsbD, PsbE, PsbF, PsbH, PsbI, PsbJ, PsbK, PsbL, PsbM, PsbT, PsbY, PsbZ, Psb30/Ycf12, at least 3 peripheral proteins of the oxygen-evolving complex and a large number of cofactors. It forms dimeric complexes.

The protein resides in the plastid. It is found in the chloroplast thylakoid membrane. Functionally, may control the interaction of photosystem II (PSII) cores with the light-harvesting antenna, regulates electron flow through the 2 photosystem reaction centers. PSII is a light-driven water plastoquinone oxidoreductase, using light energy to abstract electrons from H(2)O, generating a proton gradient subsequently used for ATP formation. This is Photosystem II reaction center protein Z from Selaginella uncinata (Blue spike-moss).